The primary structure comprises 127 residues: Protein translocase subunit SecE (127 aa).

A run of 3 helical transmembrane segments spans residues 17–37 (VKWI…MCFY), 41–61 (LFIR…TMIY), and 95–115 (FIVI…DSVI).

The protein belongs to the SecE/SEC61-gamma family. Component of the Sec protein translocase complex. Heterotrimer consisting of SecY, SecE and SecG subunits. The heterotrimers can form oligomers, although 1 heterotrimer is thought to be able to translocate proteins. Interacts with the ribosome. Interacts with SecDF, and other proteins may be involved. Interacts with SecA.

It localises to the cell inner membrane. In terms of biological role, essential subunit of the Sec protein translocation channel SecYEG. Clamps together the 2 halves of SecY. May contact the channel plug during translocation. The polypeptide is Protein translocase subunit SecE (Buchnera aphidicola subsp. Acyrthosiphon pisum (strain APS) (Acyrthosiphon pisum symbiotic bacterium)).